The sequence spans 60 residues: Large ribosomal subunit protein uL30 (60 aa).

The protein belongs to the universal ribosomal protein uL30 family. As to quaternary structure, part of the 50S ribosomal subunit.

In Lactobacillus johnsonii (strain CNCM I-12250 / La1 / NCC 533), this protein is Large ribosomal subunit protein uL30.